Here is a 61-residue protein sequence, read N- to C-terminus: L-amino-acid oxidase (61 aa).

43 to 44 is an FAD binding site; the sequence is MA.

This sequence belongs to the flavin monoamine oxidase family. FIG1 subfamily. As to quaternary structure, homodimer; non-covalently linked. It depends on FAD as a cofactor. N-glycosylated. As to expression, expressed by the venom gland.

Its subcellular location is the secreted. It catalyses the reaction an L-alpha-amino acid + O2 + H2O = a 2-oxocarboxylate + H2O2 + NH4(+). It carries out the reaction L-leucine + O2 + H2O = 4-methyl-2-oxopentanoate + H2O2 + NH4(+). Catalyzes an oxidative deamination of predominantly hydrophobic and aromatic L-amino acids, thus producing hydrogen peroxide that may contribute to the diverse toxic effects of this enzyme. Shows activity on L-Leu. Exhibits diverse biological activities, such as apoptosis, antibacterial activities against both Gram-negative and Gram-positive bacteria and antiparasitic activities, as well as induction of platelet aggregation. Effects of snake L-amino oxidases on platelets are controversial, since they either induce aggregation or inhibit agonist-induced aggregation. These different effects are probably due to different experimental conditions. This protein may also induce hemorrhage, hemolysis, and edema. In Crotalus durissus cascavella (Northeastern Brazilian rattlesnake), this protein is L-amino-acid oxidase.